Consider the following 793-residue polypeptide: uncharacterized protein (793 aa).

The signal sequence occupies residues 1–21 (MLKKTLLAYTIGFAFSPPANA). A disulfide bridge connects residues Cys769 and Cys792.

Belongs to the fimbrial export usher family.

It localises to the cell outer membrane. In terms of biological role, involved in the export and assembly of a fimbrial subunit across the outer membrane. This is an uncharacterized protein from Escherichia coli (strain K12).